The primary structure comprises 591 residues: Frizzled-9 (591 aa).

The N-terminal stretch at Met-1–Ala-22 is a signal peptide. Residues Leu-23 to Asp-229 lie on the Extracellular side of the membrane. Positions Arg-34 to Ala-155 constitute an FZ domain. Cystine bridges form between Cys-39-Cys-100, Cys-47-Cys-93, Cys-84-Cys-122, Cys-111-Cys-152, and Cys-115-Cys-139. Asn-53 carries an N-linked (GlcNAc...) asparagine glycan. The segment at Pro-58–Met-172 is required for Wnt-activated receptor activity. A glycan (N-linked (GlcNAc...) asparagine) is linked at Asn-158. A helical membrane pass occupies residues Phe-230–Val-250. The Cytoplasmic portion of the chain corresponds to Leu-251–Pro-266. Residues Ile-267 to Ala-287 traverse the membrane as a helical segment. Over Gly-288–Leu-315 the chain is Extracellular. The chain crosses the membrane as a helical span at residues Val-316–Leu-336. The Cytoplasmic portion of the chain corresponds to Thr-337–Gly-355. A helical membrane pass occupies residues Ser-356–Leu-376. At Arg-377–Gly-400 the chain is on the extracellular side. Residues Phe-401–Phe-421 traverse the membrane as a helical segment. Over Val-422 to Lys-447 the chain is Cytoplasmic. The chain crosses the membrane as a helical span at residues Ile-448–Tyr-468. The Extracellular portion of the chain corresponds to Glu-469–Ala-508. The helical transmembrane segment at Val-509–Trp-529 threads the bilayer. Over Ser-530–Leu-591 the chain is Cytoplasmic. The Lys-Thr-X-X-X-Trp motif, mediates interaction with the PDZ domain of Dvl family members motif lies at Lys-532–Trp-537. Residues Ala-554 to Leu-591 are required for CTNNB1 accumulation and TCF transcription factor activity.

This sequence belongs to the G-protein coupled receptor Fz/Smo family. Ubiquitinated by ZNRF3, leading to its degradation by the proteasome. Expressed predominantly in adult and fetal brain, testis, eye, skeletal muscle and kidney. Moderately expressed in pancreas, thyroid, adrenal cortex, small intestine and stomach. Detected in fetal liver and kidney. Expressed in neural progenitor cells.

It localises to the cell membrane. Receptor for WNT2 that is coupled to the beta-catenin canonical signaling pathway, which leads to the activation of disheveled proteins, inhibition of GSK-3 kinase, nuclear accumulation of beta-catenin and activation of Wnt target genes. Plays a role in neuromuscular junction (NMJ) assembly by negatively regulating the clustering of acetylcholine receptors (AChR) through the beta-catenin canonical signaling pathway. May play a role in neural progenitor cells (NPCs) viability through the beta-catenin canonical signaling pathway by negatively regulating cell cycle arrest leading to inhibition of neuron apoptotic process. During hippocampal development, regulates neuroblast proliferation and apoptotic cell death. Controls bone formation through non canonical Wnt signaling mediated via ISG15. Positively regulates bone regeneration through non canonical Wnt signaling. This Homo sapiens (Human) protein is Frizzled-9 (FZD9).